An 80-amino-acid polypeptide reads, in one-letter code: DNA-binding protein S1FA2 (80 aa).

Residues 54-59 (PPRKKK) carry the Nuclear localization signal motif. Basic residues predominate over residues 55–70 (PRKKKPVSKKKMKREK). The tract at residues 55 to 80 (PRKKKPVSKKKMKREKLKQGVSAPGE) is disordered.

This sequence belongs to the S1FA transcription factor family.

It is found in the nucleus. Its function is as follows. DNA-binding protein that specifically recognizes a negative element (S1F) within the RPS1 promoter. The chain is DNA-binding protein S1FA2 (S1FA2) from Oryza sativa subsp. japonica (Rice).